The primary structure comprises 297 residues: tRNA (guanine-N(7)-)-methyltransferase (297 aa).

Positions 22, 47, 74, and 97 each coordinate S-adenosyl-L-methionine. Residue aspartate 97 is part of the active site. Substrate-binding positions include lysine 101, aspartate 133, and 165 to 168; that span reads TKYE.

This sequence belongs to the class I-like SAM-binding methyltransferase superfamily. TrmB family.

It catalyses the reaction guanosine(46) in tRNA + S-adenosyl-L-methionine = N(7)-methylguanosine(46) in tRNA + S-adenosyl-L-homocysteine. The protein operates within tRNA modification; N(7)-methylguanine-tRNA biosynthesis. Catalyzes the formation of N(7)-methylguanine at position 46 (m7G46) in tRNA. The polypeptide is tRNA (guanine-N(7)-)-methyltransferase (Aquifex aeolicus (strain VF5)).